Consider the following 592-residue polypeptide: Aspartate--tRNA ligase (592 aa).

Glu173 is a binding site for L-aspartate. Residues 197-200 (QLFK) form an aspartate region. An L-aspartate-binding site is contributed by Arg219. ATP-binding positions include 219–221 (RDE) and Gln228. Position 448 (His448) interacts with L-aspartate. Glu482 is a binding site for ATP. L-aspartate is bound at residue Arg489. 534–537 (GLDR) is a binding site for ATP.

The protein belongs to the class-II aminoacyl-tRNA synthetase family. Type 1 subfamily. Homodimer.

The protein resides in the cytoplasm. It catalyses the reaction tRNA(Asp) + L-aspartate + ATP = L-aspartyl-tRNA(Asp) + AMP + diphosphate. Catalyzes the attachment of L-aspartate to tRNA(Asp) in a two-step reaction: L-aspartate is first activated by ATP to form Asp-AMP and then transferred to the acceptor end of tRNA(Asp). The polypeptide is Aspartate--tRNA ligase (Shewanella baltica (strain OS195)).